A 95-amino-acid polypeptide reads, in one-letter code: Phospholipase A2 inhibitor gammaCdcPLI (95 aa).

Intrachain disulfides connect Cys-2/Cys-26, Cys-5/Cys-12, Cys-19/Cys-30, and Cys-61/Cys-77.

Forms dimers or higher order oligomers in a temperature-dependent manner in vitro. As to expression, expressed by the liver.

Its subcellular location is the secreted. In terms of biological role, inhibits the enzymatic activity of basic and acidic PLA2 from B.jararacussu and B.pauloensis, respectively, in a dose-dependent manner. Also inhibits myotoxicity and cytotoxicity of BnSp-7 of B.pauloensis. The polypeptide is Phospholipase A2 inhibitor gammaCdcPLI (Crotalus durissus collilineatus (Brazilian rattlesnake)).